The chain runs to 394 residues: 8-amino-7-oxononanoate synthase (394 aa).

Residue Arg18 coordinates substrate. A pyridoxal 5'-phosphate-binding site is contributed by 105 to 106 (GY). His130 is a substrate binding site. Residues Ser175, His203, and Thr232 each contribute to the pyridoxal 5'-phosphate site. At Lys235 the chain carries N6-(pyridoxal phosphate)lysine. Substrate is bound at residue Thr349.

This sequence belongs to the class-II pyridoxal-phosphate-dependent aminotransferase family. BioF subfamily. In terms of assembly, homodimer. Requires pyridoxal 5'-phosphate as cofactor.

The enzyme catalyses 6-carboxyhexanoyl-[ACP] + L-alanine + H(+) = (8S)-8-amino-7-oxononanoate + holo-[ACP] + CO2. It functions in the pathway cofactor biosynthesis; biotin biosynthesis. Catalyzes the decarboxylative condensation of pimeloyl-[acyl-carrier protein] and L-alanine to produce 8-amino-7-oxononanoate (AON), [acyl-carrier protein], and carbon dioxide. The sequence is that of 8-amino-7-oxononanoate synthase from Marinobacter nauticus (strain ATCC 700491 / DSM 11845 / VT8) (Marinobacter aquaeolei).